The following is a 165-amino-acid chain: Cytochrome c-type biogenesis protein CcmE (165 aa).

At 1–29 (MSATAEDNARGAKPAGNFARTVSQRKRKR) the chain is on the cytoplasmic side. The chain crosses the membrane as a helical; Signal-anchor for type II membrane protein span at residues 30–50 (LFLIGGALAVLAVAVGLMLMA). Topologically, residues 51–165 (FSQDIRFFRT…LKEKGVWEGK (115 aa)) are periplasmic. Residues histidine 143 and tyrosine 147 each coordinate heme.

It belongs to the CcmE/CycJ family.

It is found in the cell inner membrane. Heme chaperone required for the biogenesis of c-type cytochromes. Transiently binds heme delivered by CcmC and transfers the heme to apo-cytochromes in a process facilitated by CcmF and CcmH. This is Cytochrome c-type biogenesis protein CcmE from Brucella anthropi (strain ATCC 49188 / DSM 6882 / CCUG 24695 / JCM 21032 / LMG 3331 / NBRC 15819 / NCTC 12168 / Alc 37) (Ochrobactrum anthropi).